Reading from the N-terminus, the 217-residue chain is Uracil-DNA glycosylase (217 aa).

Catalysis depends on Asp-62, which acts as the Proton acceptor.

It belongs to the uracil-DNA glycosylase (UDG) superfamily. UNG family.

It is found in the cytoplasm. The catalysed reaction is Hydrolyzes single-stranded DNA or mismatched double-stranded DNA and polynucleotides, releasing free uracil.. In terms of biological role, excises uracil residues from the DNA which can arise as a result of misincorporation of dUMP residues by DNA polymerase or due to deamination of cytosine. The protein is Uracil-DNA glycosylase of Streptococcus mutans serotype c (strain ATCC 700610 / UA159).